Consider the following 417-residue polypeptide: Serine hydroxymethyltransferase (417 aa).

Residues Leu116 and 120-122 contribute to the (6S)-5,6,7,8-tetrahydrofolate site; that span reads GHL. Residue Lys225 is modified to N6-(pyridoxal phosphate)lysine.

This sequence belongs to the SHMT family. Homodimer. Pyridoxal 5'-phosphate is required as a cofactor.

The protein localises to the cytoplasm. The enzyme catalyses (6R)-5,10-methylene-5,6,7,8-tetrahydrofolate + glycine + H2O = (6S)-5,6,7,8-tetrahydrofolate + L-serine. It participates in one-carbon metabolism; tetrahydrofolate interconversion. It functions in the pathway amino-acid biosynthesis; glycine biosynthesis; glycine from L-serine: step 1/1. In terms of biological role, catalyzes the reversible interconversion of serine and glycine with tetrahydrofolate (THF) serving as the one-carbon carrier. This reaction serves as the major source of one-carbon groups required for the biosynthesis of purines, thymidylate, methionine, and other important biomolecules. Also exhibits THF-independent aldolase activity toward beta-hydroxyamino acids, producing glycine and aldehydes, via a retro-aldol mechanism. This is Serine hydroxymethyltransferase from Hydrogenobaculum sp. (strain Y04AAS1).